The following is a 96-amino-acid chain: Co-chaperonin GroES (96 aa).

The protein belongs to the GroES chaperonin family. As to quaternary structure, heptamer of 7 subunits arranged in a ring. Interacts with the chaperonin GroEL.

The protein localises to the cytoplasm. In terms of biological role, together with the chaperonin GroEL, plays an essential role in assisting protein folding. The GroEL-GroES system forms a nano-cage that allows encapsulation of the non-native substrate proteins and provides a physical environment optimized to promote and accelerate protein folding. GroES binds to the apical surface of the GroEL ring, thereby capping the opening of the GroEL channel. The protein is Co-chaperonin GroES of Buchnera aphidicola subsp. Myzus persicae (Myzus persicae primary endosymbiont).